We begin with the raw amino-acid sequence, 322 residues long: Ferrochelatase (322 aa).

2 residues coordinate Fe cation: His-195 and Glu-276.

The protein belongs to the ferrochelatase family.

It localises to the cytoplasm. The enzyme catalyses heme b + 2 H(+) = protoporphyrin IX + Fe(2+). Its pathway is porphyrin-containing compound metabolism; protoheme biosynthesis; protoheme from protoporphyrin-IX: step 1/1. Functionally, catalyzes the ferrous insertion into protoporphyrin IX. The sequence is that of Ferrochelatase from Edwardsiella ictaluri (strain 93-146).